Reading from the N-terminus, the 369-residue chain is Nuclear pore complex-interacting protein family member A2 (369 aa).

Positions 325 to 346 (KTPPECLLTPLPPSAPPSADDN) are disordered.

Belongs to the NPIP family.

The sequence is that of Nuclear pore complex-interacting protein family member A2 (NPIPA2) from Homo sapiens (Human).